The chain runs to 463 residues: Probable Xaa-Pro aminopeptidase pepP (463 aa).

Mn(2+) contacts are provided by Asp259, Asp270, Glu393, and Glu433.

The protein belongs to the peptidase M24B family. Mn(2+) serves as cofactor.

It catalyses the reaction Release of any N-terminal amino acid, including proline, that is linked to proline, even from a dipeptide or tripeptide.. Its function is as follows. Catalyzes the removal of a penultimate prolyl residue from the N-termini of peptides. The protein is Probable Xaa-Pro aminopeptidase pepP (pepP) of Pyrenophora teres f. teres (strain 0-1) (Barley net blotch fungus).